Here is a 1543-residue protein sequence, read N- to C-terminus: ATP-binding cassette sub-family A member 10 (1543 aa).

The next 7 helical transmembrane spans lie at 83 to 103, 135 to 155, 185 to 205, 210 to 230, 240 to 260, 264 to 284, and 310 to 330; these read YWLK…IEVT, WFHF…SLNV, ICFI…IPIV, FMVI…LAFL, LAGL…FTVL, LPLS…TAGM, and IATF…TLYF. The region spanning 391-626 is the ABC transporter 1 domain; it reads IRIRNVIKEY…WGIGYHLSLH (236 aa). Residue 427–434 participates in ATP binding; that stretch reads GHNGAGKS. A run of 8 helical transmembrane segments spans residues 774-794, 890-910, 926-946, 985-1005, 1014-1034, 1046-1066, 1073-1093, and 1113-1133; these read LLCL…EKIM, LNCF…IFNF, IVLD…TNCV, IPLY…IFLG, FVLV…TYVL, GFWS…MVST, LILC…MLLI, and KTIL…LFVI. Residues 1153–1164 show a composition bias toward basic and acidic residues; sequence ISPRSRETHPNP. The tract at residues 1153 to 1177 is disordered; it reads ISPRSRETHPNPEEPEEEDEDVQAE. Positions 1165–1174 are enriched in acidic residues; the sequence is EEPEEEDEDV. The 235-residue stretch at 1206–1440 folds into the ABC transporter 2 domain; it reads YETKKSCFST…FGRDYLLEIK (235 aa). 1239–1246 serves as a coordination point for ATP; sequence GHNGAGKS.

It belongs to the ABC transporter superfamily. ABCA family. As to expression, widely expressed. Highly expressed in skeletal muscle, heart, brain and gastrointestinal tract.

It is found in the membrane. In terms of biological role, probable transporter which may play a role in macrophage lipid transport and homeostasis. This chain is ATP-binding cassette sub-family A member 10 (ABCA10), found in Homo sapiens (Human).